The following is a 154-amino-acid chain: Large ribosomal subunit protein uL13 (154 aa).

This sequence belongs to the universal ribosomal protein uL13 family. In terms of assembly, part of the 50S ribosomal subunit.

Functionally, this protein is one of the early assembly proteins of the 50S ribosomal subunit, although it is not seen to bind rRNA by itself. It is important during the early stages of 50S assembly. This chain is Large ribosomal subunit protein uL13, found in Rhodospirillum centenum (strain ATCC 51521 / SW).